Consider the following 78-residue polypeptide: Metallothionein-like protein type 2 (78 aa).

This sequence belongs to the metallothionein superfamily. Type 15 family.

Metallothioneins have a high content of cysteine residues that bind various heavy metals. This Nicotiana glutinosa (Tobacco) protein is Metallothionein-like protein type 2.